Here is a 261-residue protein sequence, read N- to C-terminus: Ribonuclease HII (261 aa).

One can recognise an RNase H type-2 domain in the interval 71–260 (HYIAGVDEVG…LHKYRHNTLL (190 aa)). The a divalent metal cation site is built by Asp-77, Glu-78, and Asp-169.

The protein belongs to the RNase HII family. Requires Mn(2+) as cofactor. It depends on Mg(2+) as a cofactor.

It localises to the cytoplasm. It carries out the reaction Endonucleolytic cleavage to 5'-phosphomonoester.. Functionally, endonuclease that specifically degrades the RNA of RNA-DNA hybrids. This is Ribonuclease HII from Oceanobacillus iheyensis (strain DSM 14371 / CIP 107618 / JCM 11309 / KCTC 3954 / HTE831).